A 329-amino-acid polypeptide reads, in one-letter code: Alpha/beta hydrolase domain-containing protein 17C (329 aa).

Residues 46-85 (APEQRGPGAPAPASAASTSSASAAAQPAPQQPEEGGAGPG) are disordered. Residues 51–79 (GPGAPAPASAASTSSASAAAQPAPQQPEE) show a composition bias toward low complexity. Residues Ser211, Asp276, and His305 each act as charge relay system in the active site.

It belongs to the AB hydrolase superfamily. ABHD17 family. Post-translationally, palmitoylated on cysteine residues located in a cysteine cluster at the N-terminus which promotes membrane localization. Palmitoylation is required for post-synaptic localization and for depalmitoylating activity towards DLG4/PSD95.

The protein localises to the recycling endosome membrane. It localises to the cell projection. The protein resides in the dendritic spine. Its subcellular location is the postsynaptic density membrane. It catalyses the reaction S-hexadecanoyl-L-cysteinyl-[protein] + H2O = L-cysteinyl-[protein] + hexadecanoate + H(+). Its function is as follows. Hydrolyzes fatty acids from S-acylated cysteine residues in proteins. Has depalmitoylating activity towards NRAS and DLG4/PSD95. The polypeptide is Alpha/beta hydrolase domain-containing protein 17C (Bos taurus (Bovine)).